A 418-amino-acid chain; its full sequence is Adenylosuccinate synthetase (418 aa).

Residues 12 to 18 and 40 to 42 each bind GTP; these read GDEGKGK and GHT. The Proton acceptor role is filled by Asp13. Mg(2+) is bound by residues Asp13 and Gly40. IMP contacts are provided by residues 13–16, 38–41, Thr128, Arg142, Gln221, Thr236, and Arg299; these read DEGK and NAGH. The Proton donor role is filled by His41. A substrate-binding site is contributed by 295–301; that stretch reads ATTGRNR. GTP contacts are provided by residues Arg301, 327 to 329, and 399 to 401; these read KAD and SYG.

The protein belongs to the adenylosuccinate synthetase family. In terms of assembly, homodimer. Requires Mg(2+) as cofactor.

It is found in the cytoplasm. The enzyme catalyses IMP + L-aspartate + GTP = N(6)-(1,2-dicarboxyethyl)-AMP + GDP + phosphate + 2 H(+). It participates in purine metabolism; AMP biosynthesis via de novo pathway; AMP from IMP: step 1/2. Functionally, plays an important role in the de novo pathway of purine nucleotide biosynthesis. Catalyzes the first committed step in the biosynthesis of AMP from IMP. This chain is Adenylosuccinate synthetase, found in Finegoldia magna (strain ATCC 29328 / DSM 20472 / WAL 2508) (Peptostreptococcus magnus).